Reading from the N-terminus, the 880-residue chain is MTTSGNSINKPDHSAHTPMMQQYLRIKTQHTDKLLFYRMGDFYELFYEDAEKAARLLDITLTHRGSSAGEPIKMAGVPFHAADQYLAKLVKLGESIAICEQIGDPATSKGPVERQVVRIITPGTLTDAGLLEERGNSIVLTLALHHGVIGLAWLNLAAGDMRVLETSPDNLASELERLHPSEILLPESLALPVILNSFTAPKRLPDWQFDYEHAMQQLTRQFGTRDLNAFGCEELRAAIMAAGALFEYVRLTQHTATDESATQVLGHLQTLRVERPETYLRMDAATRRNLEITLTLRGEEAPTLSSLLDICATSMGSRLLRHWLHHPLRNRITLQQRLDAVSDLIGAKPGILYAGIRERLKHIADIERITSRIALRTARPRDLSGLRDSLTALPEIIKLITTSTAIAIHRFVPAMEPDTTLTQLLVHALQPVPGAVIREGGVIADGYDAELDELRALQKNCGEFLLQLEARERERTGIPTLKVEYNRVHGFYIEVTRIHGEKIPADYRRRQTLKNAERYSIPELQVFENKTLTAREQALAQEKKLYEQLLEQLADFIIPLQEIARSVAELDVLCAFAERADLFGYTKPVFTDDPALDIEAGRHPVVENQIEQYIANDIQLGAVTREGRQMLIITGPNMGGKSTYMRQTALIILLAHCGSFVPAGSARIGPIDQIFTRIGAADDLAGGRSTFMVEMTEAASILRNATAQSLVLVDEIGRGTSTFDGLALAFAIARHLLTQNQSYTLFATHYFELTRLAEEFPQAINVHVTAVEHKRRIVFLHRIEEGSASRSYGLHVAALAGVPDKVIRNAGKILAQLEQEALSKSPQQTLFETIEENAEAAPASAHPVLDYLEQLHPDELTPREALEQLYLIKSMANRIK.

635 to 642 (GPNMGGKS) serves as a coordination point for ATP.

It belongs to the DNA mismatch repair MutS family.

This protein is involved in the repair of mismatches in DNA. It is possible that it carries out the mismatch recognition step. This protein has a weak ATPase activity. This chain is DNA mismatch repair protein MutS, found in Nitrosomonas eutropha (strain DSM 101675 / C91 / Nm57).